The chain runs to 282 residues: Polyamine aminopropyltransferase (282 aa).

The region spanning 11–239 (IEWYPRGYGV…SPWSFLVGVK (229 aa)) is the PABS domain. Gln-36 provides a ligand contact to S-methyl-5'-thioadenosine. Spermidine-binding residues include His-67 and Asp-91. S-methyl-5'-thioadenosine contacts are provided by residues Glu-111 and 142-143 (DG). The active-site Proton acceptor is the Asp-160. Position 160-163 (160-163 (DSTD)) interacts with spermidine. Pro-167 is an S-methyl-5'-thioadenosine binding site.

This sequence belongs to the spermidine/spermine synthase family. As to quaternary structure, homodimer or homotetramer.

It localises to the cytoplasm. The enzyme catalyses S-adenosyl 3-(methylsulfanyl)propylamine + putrescine = S-methyl-5'-thioadenosine + spermidine + H(+). The protein operates within amine and polyamine biosynthesis; spermidine biosynthesis; spermidine from putrescine: step 1/1. Its function is as follows. Catalyzes the irreversible transfer of a propylamine group from the amino donor S-adenosylmethioninamine (decarboxy-AdoMet) to putrescine (1,4-diaminobutane) to yield spermidine. The chain is Polyamine aminopropyltransferase from Thermococcus onnurineus (strain NA1).